We begin with the raw amino-acid sequence, 917 residues long: von Willebrand factor A domain-containing protein DDB_G0285975 (917 aa).

Positions 12–51 (DTTTTTTPTTPTTPTTPTTTPTTTTTPTTTPTTTTTSTTP) are disordered. Residues 13–51 (TTTTTTPTTPTTPTTPTTTPTTTTTPTTTPTTTTTSTTP) are compositionally biased toward low complexity. In terms of domain architecture, VIT spans 87-215 (RYNTGLKNIS…NVTIHLTIIS (129 aa)). Residues 339–507 (EFIFLIDCSG…NFEEQVMKLV (169 aa)) form the VWFA domain. The region spanning 679 to 741 (LFSSENRNQT…INSIPQKSNI (63 aa)) is the t-SNARE coiled-coil homology domain. Composition is skewed to low complexity over residues 751–760 (SPSEVSTSKS) and 774–818 (NNNN…NNNN). The disordered stretch occupies residues 751-822 (SPSEVSTSKS…NNNNNNSDNS (72 aa)).

The polypeptide is von Willebrand factor A domain-containing protein DDB_G0285975 (Dictyostelium discoideum (Social amoeba)).